Consider the following 195-residue polypeptide: Interferon omega-1 (195 aa).

The first 23 residues, 1–23 (MAFVLSLLMALVLVSYGPGGSLG), serve as a signal peptide directing secretion. 2 disulfides stabilise this stretch: C24–C122 and C52–C162.

The protein belongs to the alpha/beta interferon family.

The protein localises to the secreted. The chain is Interferon omega-1 (IFNW1) from Bos taurus (Bovine).